A 329-amino-acid chain; its full sequence is Peroxidase 51 (329 aa).

Positions 1 to 25 (MVVMNKTNLLLLILSLFLAINLSSA) are cleaved as a signal peptide. 4 disulfides stabilise this stretch: Cys36–Cys119, Cys69–Cys74, Cys125–Cys325, and Cys204–Cys236. His67 serves as the catalytic Proton acceptor. Ca(2+)-binding residues include Asp68, Val71, Gly73, Asp75, and Ser77. Pro167 provides a ligand contact to substrate. Heme b is bound at residue His197. Residue Thr198 participates in Ca(2+) binding. Asn215 carries N-linked (GlcNAc...) asparagine glycosylation. Ca(2+) contacts are provided by Asp249, Thr252, and Asp257.

It belongs to the peroxidase family. Classical plant (class III) peroxidase subfamily. Requires heme b as cofactor. Ca(2+) is required as a cofactor.

The protein resides in the secreted. The catalysed reaction is 2 a phenolic donor + H2O2 = 2 a phenolic radical donor + 2 H2O. Removal of H(2)O(2), oxidation of toxic reductants, biosynthesis and degradation of lignin, suberization, auxin catabolism, response to environmental stresses such as wounding, pathogen attack and oxidative stress. These functions might be dependent on each isozyme/isoform in each plant tissue. The polypeptide is Peroxidase 51 (PER51) (Arabidopsis thaliana (Mouse-ear cress)).